Here is a 321-residue protein sequence, read N- to C-terminus: Lipoyl synthase (321 aa).

The disordered stretch occupies residues 1–21 (MRHRWEDRPVAPPPDGRPTEY). The [4Fe-4S] cluster site is built by Cys-63, Cys-68, Cys-74, Cys-89, Cys-93, Cys-96, and Ser-302. Residues 75–291 (WNNRTATFMI…KKLGLEMGFS (217 aa)) enclose the Radical SAM core domain. Residues 301-321 (SSYHAHEQTEDARRGALGARG) are disordered. The segment covering 304 to 314 (HAHEQTEDARR) has biased composition (basic and acidic residues).

This sequence belongs to the radical SAM superfamily. Lipoyl synthase family. Requires [4Fe-4S] cluster as cofactor.

The protein localises to the cytoplasm. The catalysed reaction is [[Fe-S] cluster scaffold protein carrying a second [4Fe-4S](2+) cluster] + N(6)-octanoyl-L-lysyl-[protein] + 2 oxidized [2Fe-2S]-[ferredoxin] + 2 S-adenosyl-L-methionine + 4 H(+) = [[Fe-S] cluster scaffold protein] + N(6)-[(R)-dihydrolipoyl]-L-lysyl-[protein] + 4 Fe(3+) + 2 hydrogen sulfide + 2 5'-deoxyadenosine + 2 L-methionine + 2 reduced [2Fe-2S]-[ferredoxin]. It participates in protein modification; protein lipoylation via endogenous pathway; protein N(6)-(lipoyl)lysine from octanoyl-[acyl-carrier-protein]: step 2/2. In terms of biological role, catalyzes the radical-mediated insertion of two sulfur atoms into the C-6 and C-8 positions of the octanoyl moiety bound to the lipoyl domains of lipoate-dependent enzymes, thereby converting the octanoylated domains into lipoylated derivatives. The polypeptide is Lipoyl synthase (Rubrobacter xylanophilus (strain DSM 9941 / JCM 11954 / NBRC 16129 / PRD-1)).